Here is a 247-residue protein sequence, read N- to C-terminus: Homeobox-leucine zipper protein HOX17 (247 aa).

A disordered region spans residues 58 to 81; the sequence is ERAGLRGGGGSDEEDGGCGIDGSR. A DNA-binding region (homeobox) is located at residues 79 to 138; that stretch reads GSRKKLRLSKDQSAVLEDSFREHPTLNPRQKATLAQQLGLRPRQVEVWFQNRRARTKLKQ. The segment at 137 to 182 is leucine-zipper; that stretch reads KQTEVDCEFLKRCCETLTEENRRLQKEVQELRALKLVSPHLYMNMS.

Belongs to the HD-ZIP homeobox family. Class II subfamily. Expressed in seedlings, roots, stems, leaf sheaths and blades and panicles.

It is found in the nucleus. Functionally, probable transcription factor. In Oryza sativa subsp. indica (Rice), this protein is Homeobox-leucine zipper protein HOX17 (HOX17).